A 512-amino-acid polypeptide reads, in one-letter code: Anaerobic nitric oxide reductase transcription regulator NorR (512 aa).

Residues 190 to 419 (MIGESLAMQE…LEHVISRAAV (230 aa)) form the Sigma-54 factor interaction domain. ATP contacts are provided by residues 218–225 (GETGVGKE) and 281–290 (ADNGTLFLDE). The segment at residues 487–506 (WAATARALQLDTGNLHRLAK) is a DNA-binding region (H-T-H motif).

Its pathway is nitrogen metabolism; nitric oxide reduction. In terms of biological role, required for the expression of anaerobic nitric oxide (NO) reductase, acts as a transcriptional activator for at least the norVW operon. Activation also requires sigma-54. The sequence is that of Anaerobic nitric oxide reductase transcription regulator NorR from Aliivibrio fischeri (strain ATCC 700601 / ES114) (Vibrio fischeri).